The sequence spans 349 residues: UDP-N-acetylenolpyruvoylglucosamine reductase (349 aa).

One can recognise an FAD-binding PCMH-type domain in the interval 24-197; that stretch reads FGIAATARFA…VSVTFRLPKQ (174 aa). Arg173 is an active-site residue. Ser249 functions as the Proton donor in the catalytic mechanism. The active site involves Glu345.

This sequence belongs to the MurB family. The cofactor is FAD.

It localises to the cytoplasm. The enzyme catalyses UDP-N-acetyl-alpha-D-muramate + NADP(+) = UDP-N-acetyl-3-O-(1-carboxyvinyl)-alpha-D-glucosamine + NADPH + H(+). The protein operates within cell wall biogenesis; peptidoglycan biosynthesis. Its function is as follows. Cell wall formation. This chain is UDP-N-acetylenolpyruvoylglucosamine reductase, found in Burkholderia lata (strain ATCC 17760 / DSM 23089 / LMG 22485 / NCIMB 9086 / R18194 / 383).